Consider the following 416-residue polypeptide: Meiotically up-regulated protein PB1A10.08 (416 aa).

The protein localises to the cytoplasm. Functionally, may have a role in meiosis and sporulation. The polypeptide is Meiotically up-regulated protein PB1A10.08 (Schizosaccharomyces pombe (strain 972 / ATCC 24843) (Fission yeast)).